Consider the following 418-residue polypeptide: ADP-ribose glycohydrolase MACROD2 (418 aa).

The region spanning 57–238 is the Macro domain; sequence PEEIQVKNSL…IYKRKLNEFF (182 aa). Substrate-binding positions include 75-77, 88-90, 95-100, 183-189, and phenylalanine 222; these read GDI, AAN, GGGGVD, and ISTGIYG. The interval 238-418 is disordered; sequence FPKDGGDDEE…KDTNDDANEA (181 aa). The segment covering 250–262 has biased composition (basic and acidic residues); sequence KGDSDEMKEDTEG. The span at 295 to 318 shows a compositional bias: polar residues; the sequence is TGNTQDMTAMSLETNEGNDVSSPA. A compositionally biased stretch (basic and acidic residues) spans 321–360; the sequence is PLKEGEELSEAKITGEKISVEPKTPEPEDAKMTVEEKSQE. Acidic residues predominate over residues 377–389; sequence ETEDLDGDSEEPS.

It belongs to the MacroD-type family. MacroD1/2-like subfamily.

The protein resides in the nucleus. It carries out the reaction 2''-O-acetyl-ADP-D-ribose + H2O = ADP-D-ribose + acetate + H(+). The enzyme catalyses 4-O-(ADP-D-ribosyl)-L-aspartyl-[protein] + H2O = L-aspartyl-[protein] + ADP-D-ribose + H(+). It catalyses the reaction 5-O-(ADP-D-ribosyl)-L-glutamyl-[protein] + H2O = L-glutamyl-[protein] + ADP-D-ribose + H(+). The catalysed reaction is alpha-NAD(+) + H2O = ADP-D-ribose + nicotinamide + H(+). With respect to regulation, subject to product inhibition by ADP-ribose. Its function is as follows. Removes ADP-ribose from aspartate and glutamate residues in proteins bearing a single ADP-ribose moiety. Inactive towards proteins bearing poly-ADP-ribose. Deacetylates O-acetyl-ADP ribose, a signaling molecule generated by the deacetylation of acetylated lysine residues in histones and other proteins. The sequence is that of ADP-ribose glycohydrolase MACROD2 from Xenopus laevis (African clawed frog).